The sequence spans 449 residues: Phosphoglucosamine mutase (449 aa).

The active-site Phosphoserine intermediate is Ser-101. Mg(2+) contacts are provided by Ser-101, Asp-240, Asp-242, and Asp-244. At Ser-101 the chain carries Phosphoserine.

This sequence belongs to the phosphohexose mutase family. Requires Mg(2+) as cofactor. In terms of processing, activated by phosphorylation.

The enzyme catalyses alpha-D-glucosamine 1-phosphate = D-glucosamine 6-phosphate. In terms of biological role, catalyzes the conversion of glucosamine-6-phosphate to glucosamine-1-phosphate. In Streptococcus mutans serotype c (strain ATCC 700610 / UA159), this protein is Phosphoglucosamine mutase.